The sequence spans 342 residues: Trans-3-hydroxy-L-proline dehydratase (342 aa).

The active-site Proton acceptor is the S90. Residues 91 to 92 (GS), D252, and 257 to 258 (GT) contribute to the substrate site.

This sequence belongs to the proline racemase family.

It catalyses the reaction trans-3-hydroxy-L-proline = 1-pyrroline-2-carboxylate + H2O. Catalyzes the dehydration of trans-3-hydroxy-L-proline (t3LHyp) to Delta(1)-pyrroline-2-carboxylate (Pyr2C). Is likely involved in a degradation pathway that converts t3LHyp to L-proline. Displays neither proline racemase activity nor 4-hydroxyproline 2-epimerase activity. This is Trans-3-hydroxy-L-proline dehydratase from Allorhizobium ampelinum (strain ATCC BAA-846 / DSM 112012 / S4) (Agrobacterium vitis (strain S4)).